A 444-amino-acid chain; its full sequence is Cobyrinate a,c-diamide synthase (444 aa).

Positions 250–438 (IIAIAQDRAF…PHIHFFGSYK (189 aa)) constitute a GATase cobBQ-type domain. Cys332 serves as the catalytic Nucleophile.

The protein belongs to the CobB/CbiA family. It depends on Mg(2+) as a cofactor.

The enzyme catalyses cob(II)yrinate + 2 L-glutamine + 2 ATP + 2 H2O = cob(II)yrinate a,c diamide + 2 L-glutamate + 2 ADP + 2 phosphate + 2 H(+). It participates in cofactor biosynthesis; adenosylcobalamin biosynthesis; cob(II)yrinate a,c-diamide from sirohydrochlorin (anaerobic route): step 10/10. Its function is as follows. Catalyzes the ATP-dependent amidation of the two carboxylate groups at positions a and c of cobyrinate, using either L-glutamine or ammonia as the nitrogen source. The polypeptide is Cobyrinate a,c-diamide synthase (Fusobacterium nucleatum subsp. nucleatum (strain ATCC 25586 / DSM 15643 / BCRC 10681 / CIP 101130 / JCM 8532 / KCTC 2640 / LMG 13131 / VPI 4355)).